A 295-amino-acid chain; its full sequence is Probable adenylate kinase 6, chloroplastic (295 aa).

The transit peptide at 1 to 46 (MAVSHRLLRPATTTIKNTFSSLFIRSLSSSSSGSSLDPKIDLEEAA) directs the protein to the chloroplast. ATP is bound at residue 74-79 (GVGKGT). The segment at 94–123 (ATGDLVREELSSSGLLSSQLKELVNHGKLV) is NMP. Residues Thr-95, Arg-100, 121 to 123 (KLV), 151 to 154 (GFPR), and Gln-158 contribute to the AMP site. Residues 187–235 (GRRICSECGGNYNVACIDIKGDDDTPRMYMPPLLPPPNCESKLISRADD) form an LID region. Arg-188 provides a ligand contact to ATP. Arg-243 contributes to the AMP binding site. Gly-271 lines the ATP pocket.

Belongs to the adenylate kinase family. As to quaternary structure, monomer.

It is found in the plastid. It localises to the chloroplast. It catalyses the reaction AMP + ATP = 2 ADP. Functionally, catalyzes the reversible transfer of the terminal phosphate group between ATP and AMP. Plays an important role in cellular energy homeostasis and in adenine nucleotide metabolism. The protein is Probable adenylate kinase 6, chloroplastic of Arabidopsis thaliana (Mouse-ear cress).